The primary structure comprises 309 residues: MITFLPITFSILIVVIFFIGNFANGFIALINSIEWVKRQKISFAGQILTALAVSRVGLLWVLSLHWYATEFNLAFHSVEVRSTAYNVWVVTNHFSNWLSTSLSMFYLLRIATFSNLIFLHLNRRVKSVILVTLLGPLLFLVCQLFVMNMNQIVRTKEYEGNMTWKIKLKSAMYLSNTTVAMLANFVPLTLTLISFLLLICSLCKHLKKMRVHGKGSQDPSTKVHTKALQIVTSFLLVCAIYFLSIILSVWNSGGLENKPFFMFCQAIKFSYPSTHPFILIWGNKTLKQTFLSVLRNVRYWVKGQKPSSP.

A topological domain (extracellular) is located at residue methionine 1. The chain crosses the membrane as a helical span at residues isoleucine 2 to phenylalanine 22. Topologically, residues alanine 23–glutamine 46 are cytoplasmic. The chain crosses the membrane as a helical span at residues isoleucine 47 to tyrosine 67. Topologically, residues alanine 68 to asparagine 86 are extracellular. A helical membrane pass occupies residues valine 87–leucine 107. Topologically, residues leucine 108–lysine 126 are cytoplasmic. The helical transmembrane segment at serine 127 to methionine 147 threads the bilayer. The Extracellular portion of the chain corresponds to asparagine 148–threonine 178. N-linked (GlcNAc...) asparagine glycosylation is found at asparagine 161 and asparagine 176. A helical membrane pass occupies residues valine 179–isoleucine 199. The Cytoplasmic segment spans residues cysteine 200–glutamine 229. The helical transmembrane segment at isoleucine 230–tryptophan 250 threads the bilayer. Topologically, residues asparagine 251–proline 259 are extracellular. The chain crosses the membrane as a helical span at residues phenylalanine 260 to isoleucine 280. Topologically, residues tryptophan 281–proline 309 are cytoplasmic.

The protein belongs to the G-protein coupled receptor T2R family.

Its subcellular location is the membrane. It localises to the cell projection. The protein localises to the cilium membrane. Functionally, receptor that may play a role in the perception of bitterness and is gustducin-linked. May play a role in sensing the chemical composition of the gastrointestinal content. The activity of this receptor may stimulate alpha gustducin, mediate PLC-beta-2 activation and lead to the gating of TRPM5. In airway epithelial cells, binding of bitter compounds increases the intracellular calcium ion concentration and stimulates ciliary beat frequency. This chain is Taste receptor type 2 member 46 (TAS2R46), found in Papio hamadryas (Hamadryas baboon).